Reading from the N-terminus, the 491-residue chain is Limb region 1 homolog-like protein (491 aa).

Topologically, residues 1–20 (METEDVTVREQIFHDRVRET) are extracellular. A helical transmembrane segment spans residues 21–41 (IICVLLFICLYILSHFILTHF). Residues 42-59 (KKSAEFVTDDIEDATVNK) lie on the Cytoplasmic side of the membrane. A helical membrane pass occupies residues 60–80 (IALWLCTFTLSVAVCAVLLLP). The Extracellular segment spans residues 81–111 (ISILSNEVLLTFPHSYYMQWLNGSLIRGLWN). Residues 112-132 (LVFLFSNLSLVFLMPFAYFFT) form a helical membrane-spanning segment. Over 133-152 (ESEGFAGSKKGVMARVYETA) the chain is Cytoplasmic. The chain crosses the membrane as a helical span at residues 153–173 (VMLLLLSLLVLGIVWVASALL). Topologically, residues 174-192 (HHNTARESLYDLWEYYLPY) are extracellular. The chain crosses the membrane as a helical span at residues 193–213 (LYSGISLFGVLLLLLCTPFGL). Residues 214–292 (SRMFSVTGSL…RKRASPWQRN (79 aa)) are Cytoplasmic-facing. The chain crosses the membrane as a helical span at residues 293 to 313 (LVYPVAMLLLLALTAVSVLMV). Topologically, residues 314 to 346 (CFHVLELLFDESAMPRGMEDPHLGLASFSMLGS) are extracellular. The chain crosses the membrane as a helical span at residues 347-367 (LGAAVQVVIILYLMVSSVVGF). Topologically, residues 368–384 (YSSPLFTGLLPRAQDTT) are cytoplasmic. Residues 385-405 (LTQIIGNCVSLLILSSALPVF) form a helical membrane-spanning segment. Residues 406–427 (SRTLGITKFDLLGDFGRHDWLG) are Extracellular-facing. A helical membrane pass occupies residues 428–448 (SFHIVFLYNMLFAGLTSACLI). Over 449 to 491 (NTVTWALQRELIRAFGLHRLPLTVSRSTIPLKLLLANGLSKIH) the chain is Cytoplasmic.

It belongs to the LIMR family. As to quaternary structure, dimer. Can also form higher oligomers.

Its subcellular location is the cell membrane. The protein localises to the endoplasmic reticulum membrane. In terms of biological role, may play a role in lymphocyte development by negatively regulating the canonical Wnt signaling pathway. May act as a LCN1 receptor. The protein is Limb region 1 homolog-like protein (lmbr1l) of Danio rerio (Zebrafish).